The chain runs to 366 residues: N-methyltransferase fsqC (366 aa).

The N-terminal stretch at 1–18 is a signal peptide; sequence MSSNVQDIRGWPPPFANA. Residue Asn270 is glycosylated (N-linked (GlcNAc...) asparagine).

It belongs to the methyltransferase superfamily.

The protein operates within secondary metabolite biosynthesis. N-methyltransferase; part of the gene cluster that mediates the biosynthesis of the isoquinoline alkaloids fumisoquin A, fumisoquin B and fumisoquin C; as well as small amounts of fumipyrrole as a shunt metabolite. The products of the cluster lead to a brown coloration and are important for growth and conidiation. The nonribosomal peptide synthetase-like protein fsqF, which lacks a canonical condensation domain, is required for addition of a serine-derived dehydroalanine moiety to activated tyrosine but is not essential for the subsequent steps leading to isoquinoline formation. A different enzyme, most likely the ATP-grasp enzyme fsqD, is responsible for activation of tyrosine. Three additional enzymes encoded by the fsq cluster, the N-methyltransferase fsqC, the phenol 2-monooxygenase fsqG and the FAD-dependent oxidase fsqB, catalyze the formation of the isoquinoline ring system in the fumisoquins. FsqB converts the fspF thiolation domain-bound (2S,4S,5S)-2-amino-6-(3,4-dihydroxyphenyl)-4-hydroxy-5-(methylamino)hexanoyl into isoquinoline. The cyclization most likely proceeds via a two-step mechanism, beginning with FAD-dependent oxidation of the methyl group to an iminium species followed by electrophilic attack on the deprotonated phenol. This chain is N-methyltransferase fsqC, found in Aspergillus fumigatus (strain ATCC MYA-4609 / CBS 101355 / FGSC A1100 / Af293) (Neosartorya fumigata).